The primary structure comprises 505 residues: Alpha-1-syntrophin (505 aa).

A disordered region spans residues 1–77 (MASGRRAPRT…AEPGAASPPL (77 aa)). PH domains follow at residues 6 to 269 (RAPR…AQVN) and 293 to 401 (DIKR…DGCH). In terms of domain architecture, PDZ spans 87-170 (RVTVRKADAG…EVVLEVKYMK (84 aa)). 5 positions are modified to phosphoserine: Ser101, Ser184, Ser189, Ser193, and Ser200. Residues 180-211 (ASGTSVGWDSPPASPLQRQPSSPGPPPRDLRD) are disordered. An SU domain is found at 449–505 (PFEKLQMSSDDGASLLFLDFGGAEGEIQLDLHSCPKTMVFIIHSFLSAKVTRLGLLA). The calmodulin-binding stretch occupies residues 483 to 505 (PKTMVFIIHSFLSAKVTRLGLLA).

This sequence belongs to the syntrophin family. Monomer and homodimer. Interacts with the dystrophin related protein DTNA; SGCG of the dystrophin glycoprotein complex; NOS1; GRB2; GA; TGFA; MAPK12 and the sodium channel proteins SCN4A and SCN5A. Interacts with the dystrophin protein DMD in a calmodulin dependent manner and with related protein UTRN; SGCA of the dystrophin glycoprotein complex; F-actin; calmodulin and with the other members of the syntrophin family SNTB1 and SNTB2. Interacts with MYOC; regulates muscle hypertrophy. Interacts with DTNB. In terms of processing, phosphorylated by CaM-kinase II. Phosphorylation may inhibit the interaction with DMD.

It localises to the cell membrane. The protein localises to the sarcolemma. It is found in the cell junction. The protein resides in the cytoplasm. Its subcellular location is the cytoskeleton. Its function is as follows. Adapter protein that binds to and probably organizes the subcellular localization of a variety of membrane proteins. May link various receptors to the actin cytoskeleton and the extracellular matrix via the dystrophin glycoprotein complex. Plays an important role in synapse formation and in the organization of UTRN and acetylcholine receptors at the neuromuscular synapse. Binds to phosphatidylinositol 4,5-bisphosphate. This is Alpha-1-syntrophin (SNTA1) from Bos taurus (Bovine).